The following is a 429-amino-acid chain: Adenylosuccinate synthetase (429 aa).

GTP-binding positions include 12-18 (GDEGKGK) and 40-42 (GHT). Aspartate 13 functions as the Proton acceptor in the catalytic mechanism. Residues aspartate 13 and glycine 40 each coordinate Mg(2+). IMP is bound by residues 13 to 16 (DEGK), 38 to 41 (NAGH), threonine 127, arginine 141, glutamine 222, threonine 237, and arginine 301. Residue histidine 41 is the Proton donor of the active site. Substrate is bound at residue 297–303 (ATTGRPR). GTP contacts are provided by residues arginine 303, 329–331 (KLD), and 411–413 (SLG).

This sequence belongs to the adenylosuccinate synthetase family. As to quaternary structure, homodimer. Requires Mg(2+) as cofactor.

The protein localises to the cytoplasm. The catalysed reaction is IMP + L-aspartate + GTP = N(6)-(1,2-dicarboxyethyl)-AMP + GDP + phosphate + 2 H(+). Its pathway is purine metabolism; AMP biosynthesis via de novo pathway; AMP from IMP: step 1/2. Its function is as follows. Plays an important role in the de novo pathway of purine nucleotide biosynthesis. Catalyzes the first committed step in the biosynthesis of AMP from IMP. In Endomicrobium trichonymphae, this protein is Adenylosuccinate synthetase.